Consider the following 232-residue polypeptide: 7-cyano-7-deazaguanine synthase (232 aa).

Residue 8–18 (FSGGQDSTTCL) coordinates ATP. Zn(2+) contacts are provided by Cys-189, Cys-198, Cys-201, and Cys-204.

It belongs to the QueC family. It depends on Zn(2+) as a cofactor.

It catalyses the reaction 7-carboxy-7-deazaguanine + NH4(+) + ATP = 7-cyano-7-deazaguanine + ADP + phosphate + H2O + H(+). Its pathway is purine metabolism; 7-cyano-7-deazaguanine biosynthesis. Its function is as follows. Catalyzes the ATP-dependent conversion of 7-carboxy-7-deazaguanine (CDG) to 7-cyano-7-deazaguanine (preQ(0)). This chain is 7-cyano-7-deazaguanine synthase, found in Proteus mirabilis (strain HI4320).